The chain runs to 185 residues: Large ribosomal subunit protein bL25 (185 aa).

Belongs to the bacterial ribosomal protein bL25 family. CTC subfamily. Part of the 50S ribosomal subunit; part of the 5S rRNA/L5/L18/L25 subcomplex. Contacts the 5S rRNA. Binds to the 5S rRNA independently of L5 and L18.

Its function is as follows. This is one of the proteins that binds to the 5S RNA in the ribosome where it forms part of the central protuberance. The protein is Large ribosomal subunit protein bL25 of Chlamydia trachomatis serovar A (strain ATCC VR-571B / DSM 19440 / HAR-13).